Consider the following 280-residue polypeptide: Energy-coupling factor transporter ATP-binding protein EcfA (280 aa).

An ABC transporter domain is found at 5 to 240 (IDVKNLTYKY…DEMLKLTGLE (236 aa)). 40–47 (GHNGSGKS) contributes to the ATP binding site.

The protein belongs to the ABC transporter superfamily. Energy-coupling factor EcfA family. In terms of assembly, forms a stable energy-coupling factor (ECF) transporter complex composed of 2 membrane-embedded substrate-binding proteins (S component), 2 ATP-binding proteins (A component) and 2 transmembrane proteins (T component).

The protein resides in the cell membrane. Its function is as follows. ATP-binding (A) component of a common energy-coupling factor (ECF) ABC-transporter complex. Unlike classic ABC transporters this ECF transporter provides the energy necessary to transport a number of different substrates. The chain is Energy-coupling factor transporter ATP-binding protein EcfA from Pediococcus pentosaceus (strain ATCC 25745 / CCUG 21536 / LMG 10740 / 183-1w).